The sequence spans 85 residues: MVRIRLALYGTKKRPFYKMVVADSRFSRDGRFIEKLGHFNPVSKCQNSTLKLNLNRIEYWQGKGAQISKRSQKLIKLFNKKEDTV.

It belongs to the bacterial ribosomal protein bS16 family.

This chain is Small ribosomal subunit protein bS16, found in Buchnera aphidicola subsp. Schizaphis graminum (strain Sg).